The chain runs to 147 residues: Allograft inflammatory factor 1 (147 aa).

An N-acetylserine modification is found at serine 2. At lysine 11 the chain carries N6-acetyllysine. Serine 39 carries the post-translational modification Phosphoserine. Residues 45 to 80 enclose the EF-hand 1 domain; that stretch reads SKLEGFKEKYMEFDLNGNGDIDIMSLKRMLEKLGVP. Ca(2+) is bound by residues aspartate 58, asparagine 60, asparagine 62, aspartate 64, threonine 100, and aspartate 105. The region spanning 81–115 is the EF-hand 2; degenerate domain; it reads KTHLELKKLIGEVSSGSGETFSYPDFLRMMLGKRS. The segment at 128-147 is disordered; the sequence is AREKEKPTGPPAKKAISELP.

Homodimer (Potential). Monomer. Interacts with LCP1. In terms of processing, phosphorylated on serine residues. Detected in T-lymphocytes and peripheral blood mononuclear cells.

It localises to the cytoplasm. Its subcellular location is the cytoskeleton. The protein resides in the cell projection. It is found in the ruffle membrane. The protein localises to the phagocytic cup. Functionally, actin-binding protein that enhances membrane ruffling and RAC activation. Enhances the actin-bundling activity of LCP1. Binds calcium. Plays a role in RAC signaling and in phagocytosis. May play a role in macrophage activation and function. Promotes the proliferation of vascular smooth muscle cells and of T-lymphocytes. Enhances lymphocyte migration. Plays a role in vascular inflammation. The sequence is that of Allograft inflammatory factor 1 (AIF1) from Homo sapiens (Human).